A 555-amino-acid polypeptide reads, in one-letter code: Phosphoglucomutase (555 aa).

Residues T45, R49, 148-149 (SH), and K158 each bind substrate. The Phosphoserine intermediate role is filled by S148. S148 serves as a coordination point for Mg(2+). The Mg(2+) site is built by D306, D308, and D310. Substrate is bound by residues 310-311 (DR) and 393-395 (EES).

This sequence belongs to the phosphohexose mutase family. Requires Mg(2+) as cofactor.

It catalyses the reaction alpha-D-glucose 1-phosphate = alpha-D-glucose 6-phosphate. In terms of biological role, this enzyme participates in both the breakdown and synthesis of glucose. This is Phosphoglucomutase (celB) from Komagataeibacter xylinus (Gluconacetobacter xylinus).